The chain runs to 115 residues: ESX-1 secretion-associated protein EspL (115 aa).

This chain is ESX-1 secretion-associated protein EspL, found in Mycobacterium tuberculosis (strain CDC 1551 / Oshkosh).